The primary structure comprises 684 residues: Probable metal-nicotianamine transporter YSL9 (684 aa).

Residues M1–Q10 are compositionally biased toward basic residues. The segment at M1–R55 is disordered. The next 14 membrane-spanning stretches (helical) occupy residues L58–M78, L82–L102, C130–L150, G174–V194, V234–Y254, L295–I315, F341–L361, L402–F422, V430–L450, I462–V482, I515–L535, F568–A588, V612–F632, and A642–F662.

The protein belongs to the YSL (TC 2.A.67.2) family.

The protein resides in the membrane. In terms of biological role, may be involved in the transport of nicotianamine-chelated metals. This is Probable metal-nicotianamine transporter YSL9 (YSL9) from Oryza sativa subsp. japonica (Rice).